A 64-amino-acid polypeptide reads, in one-letter code: Large ribosomal subunit protein uL30 (64 aa).

The disordered stretch occupies residues 1-22; that stretch reads MSEQVKRVRVTQVGSPIGRKPG.

The protein belongs to the universal ribosomal protein uL30 family. Part of the 50S ribosomal subunit.

The polypeptide is Large ribosomal subunit protein uL30 (Acidiphilium cryptum (strain JF-5)).